The sequence spans 226 residues: Phosphoheptose isomerase (226 aa).

Positions 50–212 constitute an SIS domain; it reads IAGVFETGGK…ERMMGYGTEC (163 aa). 65–67 contacts substrate; the sequence is NGG. Residues His74 and Glu78 each coordinate Zn(2+). Substrate contacts are provided by residues Glu78, 109-110, 135-137, Ser140, and Gln188; these read ND and STS. Gln188 and His196 together coordinate Zn(2+).

It belongs to the SIS family. GmhA subfamily. Requires Zn(2+) as cofactor.

Its subcellular location is the cytoplasm. The catalysed reaction is 2 D-sedoheptulose 7-phosphate = D-glycero-alpha-D-manno-heptose 7-phosphate + D-glycero-beta-D-manno-heptose 7-phosphate. The protein operates within carbohydrate biosynthesis; D-glycero-D-manno-heptose 7-phosphate biosynthesis; D-glycero-alpha-D-manno-heptose 7-phosphate and D-glycero-beta-D-manno-heptose 7-phosphate from sedoheptulose 7-phosphate: step 1/1. Its function is as follows. Catalyzes the isomerization of sedoheptulose 7-phosphate in D-glycero-D-manno-heptose 7-phosphate. In Chlorobium phaeobacteroides (strain DSM 266 / SMG 266 / 2430), this protein is Phosphoheptose isomerase.